We begin with the raw amino-acid sequence, 290 residues long: Probable branched-chain-amino-acid aminotransferase (290 aa).

Lys-155 carries the N6-(pyridoxal phosphate)lysine modification.

It belongs to the class-IV pyridoxal-phosphate-dependent aminotransferase family. The cofactor is pyridoxal 5'-phosphate.

The catalysed reaction is L-leucine + 2-oxoglutarate = 4-methyl-2-oxopentanoate + L-glutamate. It carries out the reaction L-isoleucine + 2-oxoglutarate = (S)-3-methyl-2-oxopentanoate + L-glutamate. The enzyme catalyses L-valine + 2-oxoglutarate = 3-methyl-2-oxobutanoate + L-glutamate. It participates in amino-acid biosynthesis; L-isoleucine biosynthesis; L-isoleucine from 2-oxobutanoate: step 4/4. Its pathway is amino-acid biosynthesis; L-leucine biosynthesis; L-leucine from 3-methyl-2-oxobutanoate: step 4/4. The protein operates within amino-acid biosynthesis; L-valine biosynthesis; L-valine from pyruvate: step 4/4. Its function is as follows. Acts on leucine, isoleucine and valine. This Rickettsia conorii (strain ATCC VR-613 / Malish 7) protein is Probable branched-chain-amino-acid aminotransferase (ilvE).